Here is a 168-residue protein sequence, read N- to C-terminus: Monothiol glutaredoxin-S7, chloroplastic (168 aa).

The transit peptide at 1–54 (MAATAAASVAAISPLPGASLPRPVSARVPLLPRASPPTWRLSVGSARARSTRCL) directs the protein to the chloroplast. A Glutaredoxin domain is found at 67–168 (RATLDKVVGS…QETLEKAMLS (102 aa)). Residue lysine 84 coordinates glutathione. Cysteine 92 lines the [2Fe-2S] cluster pocket. Glutathione is bound by residues arginine 121, phenylalanine 133, and 146 to 147 (CD).

Belongs to the glutaredoxin family. CGFS subfamily.

It is found in the plastid. Its subcellular location is the chloroplast. Its function is as follows. May only reduce GSH-thiol disulfides, but not protein disulfides. The polypeptide is Monothiol glutaredoxin-S7, chloroplastic (GRXS7) (Oryza sativa subsp. japonica (Rice)).